The chain runs to 1226 residues: DNA-directed RNA polymerase subunit beta (1226 aa).

The protein belongs to the RNA polymerase beta chain family. In terms of assembly, the RNAP catalytic core consists of 2 alpha, 1 beta, 1 beta' and 1 omega subunit. When a sigma factor is associated with the core the holoenzyme is formed, which can initiate transcription.

The enzyme catalyses RNA(n) + a ribonucleoside 5'-triphosphate = RNA(n+1) + diphosphate. Its function is as follows. DNA-dependent RNA polymerase catalyzes the transcription of DNA into RNA using the four ribonucleoside triphosphates as substrates. This Leptospira interrogans serogroup Icterohaemorrhagiae serovar Lai (strain 56601) protein is DNA-directed RNA polymerase subunit beta.